Consider the following 72-residue polypeptide: Probable transcription factor elt-4 (72 aa).

The GATA-type zinc finger occupies 16 to 40 (CSNCNGTNTTLWRRKAEGDPVCNAC).

The protein localises to the nucleus. Probable transcription factor. Plays a role in regulating heme-dependent expression of heme transporter hrg-1. Modulates lifespan in a daf-16-dependent manner. The chain is Probable transcription factor elt-4 from Caenorhabditis elegans.